The sequence spans 278 residues: MTVLHSVDFFPSGKAPVAIEPRLPQAAFPEHHHDFHEIVIVEHGTGIHVFNGQPYTISGGTVCFVRDHDRHLYEHTDNLCLTNVLWRSPDAFQFLAGLDQLLPQEQDGYYPSHWRVNQSVLQQVRQLVGLMERAGDSMDAPAVANREILFMQLLVLLRRSSLMEGATNNDAKLNQLMAWLEEHFAEEVCWEAVAEQFSLSLRTLHRQLKQHTGLTPQRYLNRLRLIKARHLLRHSDHSVTEIAYRCGFGDSNHFSTLFRREFNWSPRDIRQGRDAIIQ.

The HTH araC/xylS-type domain maps to 174–272 (NQLMAWLEEH…NWSPRDIRQG (99 aa)). DNA-binding regions (H-T-H motif) lie at residues 191–212 (EAVA…KQHT) and 239–262 (VTEI…RREF).

Binds DNA as a dimer.

Its subcellular location is the cytoplasm. In terms of biological role, activates expression of the rhaBAD and rhaT operons. The protein is HTH-type transcriptional activator RhaS of Salmonella schwarzengrund (strain CVM19633).